Reading from the N-terminus, the 858-residue chain is Conidiophore development regulator abaA (858 aa).

Residues 1-22 (MSSSLYHPRPVLSSQRYTPSPD) form a disordered region. Residues 128 to 221 (QKDKGGVWRR…QVVKKFFEDL (94 aa)) constitute a DNA-binding region (TEA). Residues 500 to 522 (VEHQRKKEKRTKGDDRKNLDRAG) show a composition bias toward basic and acidic residues. 2 disordered regions span residues 500 to 535 (VEHQ…GDAA) and 792 to 858 (TGAG…AGGW). The Nuclear localization signal signature appears at 514–521 (DRKNLDRA). Over residues 809–822 (SSDQTALWTQSQWA) the composition is skewed to polar residues.

This sequence belongs to the TEC1 family.

Its subcellular location is the nucleus. In terms of biological role, abaA and wetA are pivotal regulators of conidiophore development and conidium maturation. They act individually and together to regulate their own expression and that of numerous other sporulation-specific genes. Binds to the sequence 5'-CATTCY-3', where Y is a pyrimidine, making both major- and minor-groove contacts. Plays a pivotal role in conidiation by regulating cell cycle pathways and other conidiation-related genes. This is Conidiophore development regulator abaA from Gibberella zeae (strain ATCC MYA-4620 / CBS 123657 / FGSC 9075 / NRRL 31084 / PH-1) (Wheat head blight fungus).